Here is a 116-residue protein sequence, read N- to C-terminus: Flagellar transcriptional regulator FlhD (116 aa).

Belongs to the FlhD family. As to quaternary structure, homodimer; disulfide-linked. Forms a heterohexamer composed of two FlhC and four FlhD subunits. Each FlhC binds a FlhD dimer, forming a heterotrimer, and a hexamer assembles by dimerization of two heterotrimers.

The protein localises to the cytoplasm. Functions in complex with FlhC as a master transcriptional regulator that regulates transcription of several flagellar and non-flagellar operons by binding to their promoter region. Activates expression of class 2 flagellar genes, including fliA, which is a flagellum-specific sigma factor that turns on the class 3 genes. Also regulates genes whose products function in a variety of physiological pathways. The chain is Flagellar transcriptional regulator FlhD from Escherichia coli O157:H7.